We begin with the raw amino-acid sequence, 20 residues long: Dihydrolipoamide-residue succinyltransferase component of 2-oxoglutarate dehydrogenase complex (20 aa).

This sequence belongs to the 2-oxoacid dehydrogenase family. As to quaternary structure, forms a 24-polypeptide structural core with octahedral symmetry. It depends on (R)-lipoate as a cofactor.

The protein localises to the mitochondrion membrane. It carries out the reaction N(6)-[(R)-dihydrolipoyl]-L-lysyl-[protein] + succinyl-CoA = N(6)-[(R)-S(8)-succinyldihydrolipoyl]-L-lysyl-[protein] + CoA. Its pathway is amino-acid degradation; L-lysine degradation via saccharopine pathway; glutaryl-CoA from L-lysine: step 6/6. In terms of biological role, the 2-oxoglutarate dehydrogenase complex catalyzes the overall conversion of 2-oxoglutarate to succinyl-CoA and CO(2). It contains multiple copies of three enzymatic components: 2-oxoglutarate dehydrogenase (E1), dihydrolipoamide succinyltransferase (E2) and lipoamide dehydrogenase (E3). In Solanum tuberosum (Potato), this protein is Dihydrolipoamide-residue succinyltransferase component of 2-oxoglutarate dehydrogenase complex.